The chain runs to 1213 residues: Formin (1213 aa).

Disordered regions lie at residues 1-24, 66-111, 144-169, 183-216, and 357-489; these read MEGG…SEPD, QANN…EPEP, VHTT…TSKC, GNNQ…PISQ, and DVSK…PKAN. Composition is skewed to basic and acidic residues over residues 187 to 210 and 431 to 464; these read SKEE…DTEL and EAIK…DKSP. Coiled-coil stretches lie at residues 428 to 450 and 503 to 572; these read SELE…VFER and EYQA…IGVS. Residues 624 to 774 form a disordered region; it reads ISTQGENKDS…PRKPAIEPSR (151 aa). Over residues 636–647 the composition is skewed to polar residues; it reads VPSSESVLSCQP. Composition is skewed to pro residues over residues 650–672, 680–689, and 718–751; these read MLPP…PPPF, LVPPPPPLPT, and PAPP…PPGP. Positions 652-751 constitute an FH1 domain; it reads PPSPPPPPPP…LPPPPPPPGP (100 aa). Residues 755–764 are compositionally biased toward polar residues; that stretch reads FNSTLSSSQG. The FH2 domain occupies 766–1182; sequence RKPAIEPSRP…KVAQQSVSKL (417 aa). Positions 1050–1125 form a coiled coil; sequence FQASQVKFED…ENAQKCFEET (76 aa). A disordered region spans residues 1193 to 1213; the sequence is INPTASLKERLRQKEANVNAN.

The protein belongs to the formin homology family. Cappuccino subfamily. As to expression, present in the adult brain, kidney, brain, heart and intestine and throughout the embryo.

Its subcellular location is the nucleus. In terms of biological role, is important for morphogenesis of limb and kidney and may be involved in determining dorsoventral neural tube polarity and motor neuron induction. It may also have a function in differentiated cells or be involved in maintaining specific differentiated states. In Gallus gallus (Chicken), this protein is Formin (LD).